The sequence spans 1407 residues: MKDLLKFLKAQTKTEEFDAIKIALASPDMIRSWSFGEVKKPETINYRTFKPERDGLFCARIFGPVKDYECLCGKYKRLKHRGVICEKCGVEVTQTKVRRERMGHIELASPTAHIWFLKSLPSRIGLLLDMPLRDIERVLYFESYVVIEGGMTNLERQQILTEEQYLDALEEFGDEFDAKMGAEAIQALLKSMDLEQECETLREELNETNSETKRKKLTKRIKLLEAFVQSGNKPEWMILTVLPVLPPDLRPLVPLDGGRFATSDLNDLYRRVINRNNRLKRLLDLAAPDIIVRNEKRMLQEAVDALLDNGRRGRAITGSNKRPLKSLADMIKGKQGRFRQNLLGKRVDYSGRSVITVGPYLRLHQCGLPKKMALELFKPFIYGKLELRGLATTIKAAKKMVEREEAVVWDILDEVIREHPVLLNRAPTLHRLGIQAFEPVLIEGKAIQLHPLVCAAYNADFDGDQMAVHVPLTLEAQLEARALMMSTNNILSPANGEPIIVPSQDVVLGLYYMTRDCVNAKGEGMVLTGPKEAERIYRAGLASLHARVKVRITEYEKDENGEFVATTSLKDTTVGRAILWMIVPKGLPFSIVNQALGKKAISKMLNTCYRILGLKPTVIFADQTMYTGFAYAARSGASVGIDDMVIPEKKHEIISEAEAEVAEIQEQFQSGLVTAGERYNKVIDIWAAANDRVSKAMMDNLQTETVINRDGQEEQQVSFNSIYMMADSGARGSAAQIRQLAGMRGLMAKPDGSIIETPITANFREGLNVLQYFISTHGARKGLADTALKTANSGYLTRRLVDVAQDLVVTEDDCGTHEGILMTPVIEGGDVKEPLRDRVLGRVTAEDVLKPGTADILVPRNTLLHEQWCDLLEANSVDAVKVRSVVSCDTDFGVCAHCYGRDLARGHIINKGEAIGVIAAQSIGEPGTQLTMRTFHIGGAASRAAAESSIQVKNKGSIKLSNVKSVVNSSGKLVITSRNTELKLLDEFGRTKESYKVPYGAVMAKGDGEQVAGGETVANWDPHTMPVITEVSGFIRFTDMIDGQTITRQTDELTGLSSLVVLDSAERTTGGKDLRPALKIVDAQGNDVLIPGTDMPAQYFLPGKAIVQLEDGVQISSGDTLARIPQESGGTKDITGGLPRVADLFEARRPKEPAILAEIAGIVSFGKETKGKRRLVITPVDGSDPYEEMIPKWRQLNVFEGERVERGDVISDGPEAPHDILRLRGVHAVTRYIVNEVQDVYRLQGVKINDKHIEVIVRQMLRKATIESAGSSDFLEGEQVEYSRVKIANRELEANGKVGATFSRDLLGITKASLATESFISAASFQETTRVLTEAAVAGKRDELRGLKENVIVGRLIPAGTGYAYHQDRMRRRAAGEQPATPQVTAEDASASLAELLNAGLGGSDNE.

Zn(2+) is bound by residues C70, C72, C85, and C88. Mg(2+)-binding residues include D460, D462, and D464. Residues C814, C888, C895, and C898 each coordinate Zn(2+).

It belongs to the RNA polymerase beta' chain family. As to quaternary structure, the RNAP catalytic core consists of 2 alpha, 1 beta, 1 beta' and 1 omega subunit. When a sigma factor is associated with the core the holoenzyme is formed, which can initiate transcription. Mg(2+) serves as cofactor. The cofactor is Zn(2+).

The catalysed reaction is RNA(n) + a ribonucleoside 5'-triphosphate = RNA(n+1) + diphosphate. Its function is as follows. DNA-dependent RNA polymerase catalyzes the transcription of DNA into RNA using the four ribonucleoside triphosphates as substrates. This is DNA-directed RNA polymerase subunit beta' from Salmonella arizonae (strain ATCC BAA-731 / CDC346-86 / RSK2980).